A 441-amino-acid polypeptide reads, in one-letter code: MTSSTTTRSEALFERARAVTPGGVNSPVRAFKSVGGVPRFIREAHGAYLTDMDDTRYVDYIGSWGPMILGHDHPTIREAIATALTGGTSFGAPGEREVELAELVTRLTGAGRVRFVNSGTEATMSALRLARGFTGRKFIVKFRGNYHGHADGLLVEAGSGLLTNAEGVLGSAAPSSAGVPEEYASLTLVSEYNDPAALDALMRLRGHEVAAVIFEPVVGNAGVLVPTPDFLEALHRVKASGALLVADEVMTGFRLSLNGATGLLGLEPDLTCWGKIIGGGLPVGAYGGRADVMDFVSPQGPVYQAGTLSGNPLAMAAGLATLQTLEADPGIYGRLEAYTAALASGLRAAADEAGVPVSINRVGSMLTAFHQDVPDGSIRTYADAARSDTTGFATWFQGMLARGVYWAPSQFESIFVSGAHTDRELNVTLEAARSAYGGTPV.

Lysine 275 carries the N6-(pyridoxal phosphate)lysine modification.

This sequence belongs to the class-III pyridoxal-phosphate-dependent aminotransferase family. HemL subfamily. As to quaternary structure, homodimer. It depends on pyridoxal 5'-phosphate as a cofactor.

The protein localises to the cytoplasm. It catalyses the reaction (S)-4-amino-5-oxopentanoate = 5-aminolevulinate. It functions in the pathway porphyrin-containing compound metabolism; protoporphyrin-IX biosynthesis; 5-aminolevulinate from L-glutamyl-tRNA(Glu): step 2/2. The chain is Glutamate-1-semialdehyde 2,1-aminomutase from Deinococcus deserti (strain DSM 17065 / CIP 109153 / LMG 22923 / VCD115).